The following is a 914-amino-acid chain: Trafficking kinesin-binding protein 2 (914 aa).

Residues 1-21 (MSQSQNAIFTSPTGEENLMNS) show a composition bias toward polar residues. Positions 1-30 (MSQSQNAIFTSPTGEENLMNSNHRDSESIT) are disordered. One can recognise an HAP1 N-terminal domain in the interval 48 to 353 (EEQLPQYRLK…QEEIKELRSR (306 aa)). Positions 134–354 (QALLKRNHVL…EEIKELRSRS (221 aa)) form a coiled coil. The interval 359-509 (HLYFSQSYGA…KQFFAEEWQR (151 aa)) is interaction with HGS. Serine 420 carries the phosphoserine modification. 2 disordered regions span residues 447 to 482 (QQTE…DSDL) and 765 to 787 (QPLP…SPCP). Positions 454–471 (LLNQGSSSEEVAGSSQKM) are enriched in polar residues. Residues 775–787 (STPPNSPSHSPCP) show a composition bias toward pro residues.

It belongs to the milton family. As to quaternary structure, interacts with GABA-A receptor and O-GlcNAc transferase. Interacts with HGS. Interacts with RHOT1/Miro-1 and RHOT2/Miro-2. Post-translationally, O-glycosylated. As to expression, widely expressed, with highest expression in heart.

It localises to the cytoplasm. The protein resides in the early endosome. The protein localises to the mitochondrion. Its function is as follows. May regulate endosome-to-lysosome trafficking of membrane cargo, including EGFR. This is Trafficking kinesin-binding protein 2 (TRAK2) from Homo sapiens (Human).